We begin with the raw amino-acid sequence, 120 residues long: Basic phospholipase A2 Cc2-PLA2 (120 aa).

Disulfide bonds link cysteine 26–cysteine 113, cysteine 28–cysteine 44, cysteine 43–cysteine 95, cysteine 49–cysteine 120, cysteine 50–cysteine 88, cysteine 57–cysteine 81, and cysteine 75–cysteine 86. Ca(2+) is bound by residues tyrosine 27, glycine 29, and glycine 31. The active site involves histidine 47. A Ca(2+)-binding site is contributed by aspartate 48. Residue aspartate 89 is part of the active site.

This sequence belongs to the phospholipase A2 family. Group II subfamily. D49 sub-subfamily. In terms of assembly, monomer. Ca(2+) serves as cofactor. Expressed by the venom gland.

The protein resides in the secreted. It catalyses the reaction a 1,2-diacyl-sn-glycero-3-phosphocholine + H2O = a 1-acyl-sn-glycero-3-phosphocholine + a fatty acid + H(+). In terms of biological role, basic phospholipase A2 that inhibits ADP-, thrombin- and arachidonic acid-induced platelet aggregation. It also exhibits anticoagulant effects upon human plasma in vitro. It induces a high hemolytic activity reaching its maximum after 24 hours. It induces a marked elevation of plasmatic levels of interleukin-6 and -10, eosinophil peroxidase and complement lytic activities and it also provokes a drastic increase of lymphocytes, monocytes and neutrophils in peripheral blood accompanied by a rapid intense migration of neutrophils to the peritoneal cavity. PLA2 catalyzes the calcium-dependent hydrolysis of the 2-acyl groups in 3-sn-phosphoglycerides. In Cerastes cerastes (Horned desert viper), this protein is Basic phospholipase A2 Cc2-PLA2.